A 407-amino-acid chain; its full sequence is Phosphopentomutase (407 aa).

Mn(2+) is bound by residues Asp11, Asp305, His310, Asp346, His347, and His358.

This sequence belongs to the phosphopentomutase family. It depends on Mn(2+) as a cofactor.

The protein resides in the cytoplasm. The enzyme catalyses 2-deoxy-alpha-D-ribose 1-phosphate = 2-deoxy-D-ribose 5-phosphate. The catalysed reaction is alpha-D-ribose 1-phosphate = D-ribose 5-phosphate. It participates in carbohydrate degradation; 2-deoxy-D-ribose 1-phosphate degradation; D-glyceraldehyde 3-phosphate and acetaldehyde from 2-deoxy-alpha-D-ribose 1-phosphate: step 1/2. Functionally, isomerase that catalyzes the conversion of deoxy-ribose 1-phosphate (dRib-1-P) and ribose 1-phosphate (Rib-1-P) to deoxy-ribose 5-phosphate (dRib-5-P) and ribose 5-phosphate (Rib-5-P), respectively. The chain is Phosphopentomutase from Legionella pneumophila (strain Lens).